The following is an 89-amino-acid chain: UPF0335 protein RPE_4107 (89 aa).

The protein belongs to the UPF0335 family.

This Rhodopseudomonas palustris (strain BisA53) protein is UPF0335 protein RPE_4107.